Here is a 270-residue protein sequence, read N- to C-terminus: Tetraspanin-2 (270 aa).

The Cytoplasmic segment spans residues 1–8 (MALANNLT). The chain crosses the membrane as a helical span at residues 9–29 (AILNLLALLCSIPITASGIWL). The Extracellular segment spans residues 30–42 (ASKPDNECVNLLR). Residues 43–63 (WPVVVLGVLILVVSATGFIGA) traverse the membrane as a helical segment. The Cytoplasmic segment spans residues 64-74 (YKYKETLLAVY). Residues 75-95 (LCCMAILIGLLLVVLIFAFVV) traverse the membrane as a helical segment. Topologically, residues 96–232 (TRPDGSYRVP…NLRKEWRKAN (137 aa)) are extracellular. Residues 233–253 (LILIITVVVLIWVYVIACSAF) traverse the membrane as a helical segment. At 254–270 (RNAQTEDLFRKYKQGWV) the chain is on the cytoplasmic side.

Belongs to the tetraspanin (TM4SF) family.

The protein resides in the membrane. May be involved in the regulation of cell differentiation. The polypeptide is Tetraspanin-2 (TET2) (Arabidopsis thaliana (Mouse-ear cress)).